A 176-amino-acid polypeptide reads, in one-letter code: tRNA (adenine(37)-N6)-methyltransferase (176 aa).

Positions 1–94 (SFSHIWVQFV…YLPFVEAQPD (94 aa)) constitute a TsaA-like domain. S-adenosyl-L-methionine-binding positions include histidine 12, 12-13 (HG), arginine 40, leucine 50, and 74-77 (LDGT).

The protein belongs to the tRNA methyltransferase O family.

The catalysed reaction is N(6)-L-threonylcarbamoyladenosine(37) in tRNA + S-adenosyl-L-methionine = N(6)-methyl,N(6)-L-threonylcarbamoyladenosine(37) in tRNA + S-adenosyl-L-homocysteine + H(+). S-adenosyl-L-methionine-dependent methyltransferase responsible for the addition of the methyl group in the formation of N6-methyl-N6-threonylcarbamoyladenosine at position 37 (m(6)t(6)A37) of the tRNA anticodon loop of tRNA(Thr)(GGU). The methyl group of m(6)t(6)A37 appears to slightly improve the efficiency of the tRNA decoding ability. Binds to tRNA. The sequence is that of tRNA (adenine(37)-N6)-methyltransferase from Eikenella corrodens.